We begin with the raw amino-acid sequence, 415 residues long: Glutamate-1-semialdehyde 2,1-aminomutase (415 aa).

K260 is modified (N6-(pyridoxal phosphate)lysine).

Belongs to the class-III pyridoxal-phosphate-dependent aminotransferase family. HemL subfamily. The cofactor is pyridoxal 5'-phosphate.

The protein localises to the cytoplasm. The enzyme catalyses (S)-4-amino-5-oxopentanoate = 5-aminolevulinate. It functions in the pathway porphyrin-containing compound metabolism; protoporphyrin-IX biosynthesis; 5-aminolevulinate from L-glutamyl-tRNA(Glu): step 2/2. This is Glutamate-1-semialdehyde 2,1-aminomutase from Methanoculleus marisnigri (strain ATCC 35101 / DSM 1498 / JR1).